We begin with the raw amino-acid sequence, 141 residues long: Large ribosomal subunit protein uL16 (141 aa).

This sequence belongs to the universal ribosomal protein uL16 family. Part of the 50S ribosomal subunit.

Binds 23S rRNA and is also seen to make contacts with the A and possibly P site tRNAs. This is Large ribosomal subunit protein uL16 from Campylobacter hominis (strain ATCC BAA-381 / DSM 21671 / CCUG 45161 / LMG 19568 / NCTC 13146 / CH001A).